Reading from the N-terminus, the 1484-residue chain is Glutamate receptor ionotropic, NMDA 2B (1484 aa).

The signal sequence occupies residues 1–26 (MKPRAECCSPKFWLVLAVLAVSGSRA). The Extracellular segment spans residues 27 to 555 (RSQKSPPSIG…SPSAFLEPFS (529 aa)). Asn-74 carries N-linked (GlcNAc...) asparagine glycosylation. Cysteines 86 and 321 form a disulfide. Residues His-127 and Glu-284 each coordinate Zn(2+). N-linked (GlcNAc...) asparagine glycans are attached at residues Asn-341, Asn-348, Asn-444, and Asn-491. Disulfide bonds link Cys-429/Cys-456 and Cys-436/Cys-457. 2 residues coordinate L-glutamate: Thr-514 and Arg-519. Asn-542 is a glycosylation site (N-linked (GlcNAc...) asparagine). Residues 556 to 576 (ADVWVMMFVMLLIVSAVAVFV) traverse the membrane as a helical segment. At 577-601 (FEYFSPVGYNRCLADGREPGGPSFT) the chain is on the cytoplasmic side. The segment at residues 602-613 (IGKAIWLLWGLV) is an intramembrane region (discontinuously helical). The segment at 604 to 623 (KAIWLLWGLVFNNSVPVQNP) is pore-forming. The Cytoplasmic segment spans residues 614–627 (FNNSVPVQNPKGTT). A helical membrane pass occupies residues 628 to 647 (SKIMVSVWAFFAVIFLASYT). Residues 648–819 (ANLAAFMIQE…SSQLDIDNMA (172 aa)) lie on the Extracellular side of the membrane. A glycan (N-linked (GlcNAc...) asparagine) is linked at Asn-688. L-glutamate is bound by residues 690–691 (ST) and Asp-732. Residues 820 to 835 (GVFYMLGAAMALSLIT) traverse the membrane as a helical segment. At 836–1484 (FICEHLFYWQ…EKLSSIESDV (649 aa)) the chain is on the cytoplasmic side. Phosphoserine is present on residues Ser-882, Ser-886, Ser-917, and Ser-920. Phosphotyrosine is present on residues Tyr-962 and Tyr-1039. Phosphoserine occurs at positions 1058, 1061, and 1064. Positions 1074-1097 (EGNAAKRRKQQYKDSLKKRPASAK) are disordered. Phosphotyrosine is present on residues Tyr-1109 and Tyr-1133. Ser-1143 carries the post-translational modification Phosphoserine. A Phosphotyrosine modification is found at Tyr-1155. The tract at residues 1161 to 1194 (DFKRDSVSGGGPCTNRSHIKHGTGDKHGVVSGVP) is disordered. A phosphoserine mark is found at Ser-1255 and Ser-1259. The disordered stretch occupies residues 1271-1301 (AVTSNASTTKYPQSPTNSKAQKKNRNKLRRQ). Residues 1272-1289 (VTSNASTTKYPQSPTNSK) show a composition bias toward polar residues. Over residues 1290-1301 (AQKKNRNKLRRQ) the composition is skewed to basic residues. Positions 1292-1304 (KKNRNKLRRQHSY) are interaction with DAPK1. The residue at position 1303 (Ser-1303) is a Phosphoserine; by DAPK1. Tyr-1474 bears the Phosphotyrosine mark. A PDZ-binding motif is present at residues 1482-1484 (SDV).

Belongs to the glutamate-gated ion channel (TC 1.A.10.1) family. NR2B/GRIN2B subfamily. Heterotetramer. Forms heterotetrameric channels composed of two GluN1/zeta subunits (GRIN1), and two identical GluN2/epsilon subunits (GRIN2A, GRIN2B, GRIN2C or GRIN2D) or GluN3 subunits (GRIN3A or GRIN3B) (in vitro). Can also form heterotetrameric channels that contain at least two GluN1 subunits and at least two different GluN2 subunits (or a combination of one GluN2 and one GluN3 subunits) (in vitro). In vivo, the subunit composition may depend on the expression levels of the different subunits. Found in a complex with GRIN1 and GRIN3B. Found in a complex with GRIN1, GRIN3A and PPP2CB. Interacts with PDZ domains of PATJ, DLG3 and DLG4. Interacts with HIP1 and NETO1. Interacts with MAGI3. Interacts with DAPK1. Found in a complex with GRIN1 and PRR7. Interacts with PRR7. Interacts with CAMK2A. Interacts with ARC; preventing ARC oligomerization. Interacts with TMEM25. Interacts (via the extreme C-terminus) with FRMPD2 (via the second PDZ domain); the interaction is direct and is likely to promote NMDAR-mediated neural signal transmission. Interacts with FAM81A; the interaction facilitates condensate formation via liquid-liquid phase separation. Phosphorylated on tyrosine residues. Phosphorylation at Ser-1303 by DAPK1 enhances synaptic NMDA receptor channel activity. Primarily found in the fronto-parieto-temporal cortex and hippocampus pyramidal cells, lower expression in the basal ganglia.

It localises to the cell membrane. It is found in the postsynaptic cell membrane. The protein localises to the cell projection. Its subcellular location is the dendrite. The protein resides in the late endosome. It localises to the lysosome. It is found in the cytoplasm. The protein localises to the cytoskeleton. It catalyses the reaction Ca(2+)(in) = Ca(2+)(out). The enzyme catalyses Na(+)(in) = Na(+)(out). The catalysed reaction is K(+)(in) = K(+)(out). In terms of biological role, component of N-methyl-D-aspartate (NMDA) receptors (NMDARs) that function as heterotetrameric, ligand-gated cation channels with high calcium permeability and voltage-dependent block by Mg(2+). Participates in synaptic plasticity for learning and memory formation by contributing to the long-term depression (LTD) of hippocampus membrane currents. Channel activation requires binding of the neurotransmitter L-glutamate to the GluN2 subunit, glycine or D-serine binding to the GluN1 subunit, plus membrane depolarization to eliminate channel inhibition by Mg(2+). NMDARs mediate simultaneously the potasium efflux and the influx of calcium and sodium. Each GluN2 subunit confers differential attributes to channel properties, including activation, deactivation and desensitization kinetics, pH sensitivity, Ca2(+) permeability, and binding to allosteric modulators. In concert with DAPK1 at extrasynaptic sites, acts as a central mediator for stroke damage. Its phosphorylation at Ser-1303 by DAPK1 enhances synaptic NMDA receptor channel activity inducing injurious Ca2+ influx through them, resulting in an irreversible neuronal death. The protein is Glutamate receptor ionotropic, NMDA 2B of Homo sapiens (Human).